A 128-amino-acid chain; its full sequence is Large ribosomal subunit protein bL20c (128 aa).

It belongs to the bacterial ribosomal protein bL20 family.

Its subcellular location is the plastid. The protein resides in the chloroplast. In terms of biological role, binds directly to 23S ribosomal RNA and is necessary for the in vitro assembly process of the 50S ribosomal subunit. It is not involved in the protein synthesizing functions of that subunit. The sequence is that of Large ribosomal subunit protein bL20c from Gossypium barbadense (Sea Island cotton).